The sequence spans 343 residues: Fructose-1,6-bisphosphatase class 1 (343 aa).

Glu-99, Asp-121, Leu-123, and Asp-124 together coordinate Mg(2+). Residues 124 to 127 (DGSS), Asn-218, Tyr-250, and Lys-283 contribute to the substrate site. Glu-289 is a Mg(2+) binding site.

The protein belongs to the FBPase class 1 family. As to quaternary structure, homotetramer. Mg(2+) is required as a cofactor.

The protein resides in the cytoplasm. It carries out the reaction beta-D-fructose 1,6-bisphosphate + H2O = beta-D-fructose 6-phosphate + phosphate. It functions in the pathway carbohydrate biosynthesis; gluconeogenesis. The protein is Fructose-1,6-bisphosphatase class 1 of Leptospira biflexa serovar Patoc (strain Patoc 1 / Ames).